The chain runs to 347 residues: Probable E3 ubiquitin-protein ligase DTX3 (347 aa).

The disordered stretch occupies residues 113–157; the sequence is EHPEMHRAGPPPLRAAPLLPPGARGLPPPPPPLPPPLPPRLREEA. The segment covering 121–151 has biased composition (pro residues); the sequence is GPPPLRAAPLLPPGARGLPPPPPPLPPPLPP. The RING-type zinc-finger motif lies at 164–205; that stretch reads CPICLGEIQNAKTLEKCRHSFCEGCITRALQVKKACPMCGRF.

Belongs to the Deltex family. As to quaternary structure, homodimer. May form a heterodimers with other members of the Deltex family. Interacts with NOTCH1.

It localises to the cytoplasm. It catalyses the reaction S-ubiquitinyl-[E2 ubiquitin-conjugating enzyme]-L-cysteine + [acceptor protein]-L-lysine = [E2 ubiquitin-conjugating enzyme]-L-cysteine + N(6)-ubiquitinyl-[acceptor protein]-L-lysine.. The protein operates within protein modification; protein ubiquitination. Regulator of Notch signaling, a signaling pathway involved in cell-cell communications that regulates a broad spectrum of cell-fate determinations. Probably acts both as a positive and negative regulator of Notch, depending on the developmental and cell context. Functions as an ubiquitin ligase protein in vitro, suggesting that it may regulate the Notch pathway via some ubiquitin ligase activity. This Homo sapiens (Human) protein is Probable E3 ubiquitin-protein ligase DTX3 (DTX3).